Reading from the N-terminus, the 388-residue chain is Succinate--CoA ligase [ADP-forming] subunit beta (388 aa).

The ATP-grasp domain maps to 9–244 (KQLFAQYGLP…PAQNDAREAH (236 aa)). ATP is bound by residues Lys-46, 53–55 (GRG), Glu-99, Thr-102, and Glu-107. Residues Asn-199 and Asp-213 each coordinate Mg(2+). Substrate-binding positions include Asn-264 and 321 to 323 (GIV).

This sequence belongs to the succinate/malate CoA ligase beta subunit family. As to quaternary structure, heterotetramer of two alpha and two beta subunits. It depends on Mg(2+) as a cofactor.

The catalysed reaction is succinate + ATP + CoA = succinyl-CoA + ADP + phosphate. It catalyses the reaction GTP + succinate + CoA = succinyl-CoA + GDP + phosphate. Its pathway is carbohydrate metabolism; tricarboxylic acid cycle; succinate from succinyl-CoA (ligase route): step 1/1. Functionally, succinyl-CoA synthetase functions in the citric acid cycle (TCA), coupling the hydrolysis of succinyl-CoA to the synthesis of either ATP or GTP and thus represents the only step of substrate-level phosphorylation in the TCA. The beta subunit provides nucleotide specificity of the enzyme and binds the substrate succinate, while the binding sites for coenzyme A and phosphate are found in the alpha subunit. The chain is Succinate--CoA ligase [ADP-forming] subunit beta from Edwardsiella ictaluri (strain 93-146).